The chain runs to 393 residues: Sugar efflux transporter B (393 aa).

12 helical membrane passes run 13-33, 52-72, 84-101, 105-124, 152-172, 174-194, 219-239, 253-273, 283-303, 308-328, 344-364, and 366-386; these read FDLTSTAFLIVAFLTGIAGAL, MVGFFFTGSAVIGIIVSQFLA, LIVFCCVLGMLACVLFAW, YFILLFIGVFLSSFGSTANP, VSLAWVIGPPLAYALAMGFSF, VMYLSAAVAFIVCGVMVWFFL, LLLFVICTLMWGTNSLYIINM, LAGVMMGTAAGLEIPTMLIAG, LLMCIAVVAGLCFYVGMLLAH, LLGLQLLNAIYIGILGGIGML, LYTNTIRVGWIIAGSLAGIAA, and IWNYHAVFWFALVMIVATMFC.

Belongs to the major facilitator superfamily. Set transporter family.

It is found in the cell inner membrane. In terms of biological role, involved in the efflux of sugars. The physiological role may be the detoxification of non-metabolizable sugar analogs. Can transport lactose and glucose. The sequence is that of Sugar efflux transporter B (setB) from Salmonella typhimurium (strain LT2 / SGSC1412 / ATCC 700720).